Consider the following 805-residue polypeptide: Zinc finger CCCH domain-containing protein 11B (805 aa).

2 consecutive C3H1-type zinc fingers follow at residues 2-29 and 31-57; these read PNQG…HCEA and LGNE…HMEI. Disordered regions lie at residues 140-194, 223-351, 364-433, 449-468, 481-506, and 715-805; these read KVES…GLRV, KKMK…DKVN, MLLE…TCIK, IVAS…SMQE, KALR…PGAR, and VTVP…PLEL. The span at 160 to 175 shows a compositional bias: acidic residues; the sequence is ADDDEDDDDQFSEEGD. Positions 364–390 are enriched in basic and acidic residues; that stretch reads MLLERASQKHGESQTKLKTEGPSKTDD. Residues 391–402 show a composition bias toward polar residues; the sequence is STSGARSSSTIR. Residues 403–423 are a coiled coil; the sequence is IKTFSEVLAEEEHRQQEAERQ. 2 stretches are compositionally biased toward basic and acidic residues: residues 412 to 433 and 455 to 468; these read EEEH…TCIK and QSEE…SMQE. Low complexity-rich tracts occupy residues 486–498 and 730–749; these read QQSS…SPSQ and PPTQ…PSSS. Positions 750-763 are enriched in polar residues; the sequence is QMSMKTRRLSSAST. Residues 789 to 805 are compositionally biased toward acidic residues; sequence EIDLDPGKDEDDLPLEL.

In terms of biological role, may play a role in mRNA transport. The sequence is that of Zinc finger CCCH domain-containing protein 11B from Homo sapiens (Human).